The sequence spans 119 residues: Auxin-responsive protein SAUR78 (119 aa).

Belongs to the ARG7 family.

Its function is as follows. May be involved in the regulation of ethylene receptor signaling. Promotes cell expansion and plant growth. The sequence is that of Auxin-responsive protein SAUR78 from Arabidopsis thaliana (Mouse-ear cress).